Reading from the N-terminus, the 289-residue chain is MKIIVPATSANIGPGFDSVGVAVTKYLQIEVCEERDEWLIEHQIGKWIPHDERNLLLKIALQIVPDLQPRRLKMTSDVPLARGLGSSSSVIVAGIELANQLGQLNLSDHEKLQLATKIEGHPDNVAPAIYGNLVIASSVEGQVSAIVADFPECDFLAYIPNYELRTRDSRSVLPKKLSYKEAVAASSIANVAVAALLAGDMVTAGQAIEGDLFHERYRQDLVREFAMIKQVTKENGAYATYLSGAGPTVMVLASHDKMPIIKAELEKQPFKGKLHDLRVDTQGVRVEAK.

79 to 89 (PLARGLGSSSS) contacts ATP.

It belongs to the GHMP kinase family. Homoserine kinase subfamily.

Its subcellular location is the cytoplasm. The catalysed reaction is L-homoserine + ATP = O-phospho-L-homoserine + ADP + H(+). Its pathway is amino-acid biosynthesis; L-threonine biosynthesis; L-threonine from L-aspartate: step 4/5. In terms of biological role, catalyzes the ATP-dependent phosphorylation of L-homoserine to L-homoserine phosphate. This is Homoserine kinase from Streptococcus pneumoniae (strain Taiwan19F-14).